A 1425-amino-acid chain; its full sequence is Ferlin 1 (1425 aa).

3 C2 domains span residues 1–123 (MAAK…RQWV), 161–281 (VNEG…PRWF), and 506–629 (TKAG…PVWL). Residues 871-952 (RPQASRLSRE…ALAASPEEET (82 aa)) form a disordered region. Composition is skewed to basic and acidic residues over residues 877-889 (LSRE…ERGK) and 912-926 (ETEK…KKEG). 2 C2 domains span residues 1032 to 1160 (EMDA…EQMV) and 1192 to 1319 (RADY…QQHY). The helical transmembrane segment at 1404-1424 (TGVWMTVAGIIALVIFVMFLL) threads the bilayer.

The protein belongs to the ferlin family.

It localises to the golgi apparatus. The protein resides in the trans-Golgi network membrane. It is found in the endosome membrane. The protein localises to the cytoplasm. Plays a role in microneme replenishment, probably at the vesicular trafficking level. Directs microneme organelle traffic differentially based on microneme population. Regulates microneme secretion: facilitates microneme membrane fusion with the plasma membrane. This is Ferlin 1 from Toxoplasma gondii.